The following is an 89-amino-acid chain: UPF0367 protein P9515_01381 (89 aa).

Belongs to the UPF0367 family.

This Prochlorococcus marinus (strain MIT 9515) protein is UPF0367 protein P9515_01381.